A 521-amino-acid polypeptide reads, in one-letter code: Protein translocase subunit SecD (521 aa).

The next 6 membrane-spanning stretches (helical) occupy residues 8 to 28 (LKLASVLGVCLLGLLLCLPNG), 359 to 379 (AGILSLGVGFLLVVVFMVLFY), 388 to 408 (IALLANLVLMVAILSLFEATL), 410 to 430 (LPGMAGMLLTLGMAVDANILI), 459 to 479 (IVDSNATAFLAHVMLFVFGTG), and 483 to 503 (GFALTITIGIATTLFTTLLLS).

Belongs to the SecD/SecF family. SecD subfamily. In terms of assembly, forms a complex with SecF. Part of the essential Sec protein translocation apparatus which comprises SecA, SecYEG and auxiliary proteins SecDF-YajC and YidC.

The protein resides in the cell inner membrane. Its function is as follows. Part of the Sec protein translocase complex. Interacts with the SecYEG preprotein conducting channel. SecDF uses the proton motive force (PMF) to complete protein translocation after the ATP-dependent function of SecA. This is Protein translocase subunit SecD from Acetobacter pasteurianus (strain NBRC 105184 / IFO 3283-01).